Consider the following 378-residue polypeptide: Erythronate-4-phosphate dehydrogenase (378 aa).

2 residues coordinate substrate: Ser-45 and Thr-66. 2 residues coordinate NAD(+): Asp-146 and Thr-175. Residue Arg-208 is part of the active site. Asp-232 provides a ligand contact to NAD(+). Residue Glu-237 is part of the active site. Residue His-254 is the Proton donor of the active site. Gly-257 is an NAD(+) binding site. Tyr-258 lines the substrate pocket.

It belongs to the D-isomer specific 2-hydroxyacid dehydrogenase family. PdxB subfamily. Homodimer.

The protein resides in the cytoplasm. It carries out the reaction 4-phospho-D-erythronate + NAD(+) = (R)-3-hydroxy-2-oxo-4-phosphooxybutanoate + NADH + H(+). It participates in cofactor biosynthesis; pyridoxine 5'-phosphate biosynthesis; pyridoxine 5'-phosphate from D-erythrose 4-phosphate: step 2/5. In terms of biological role, catalyzes the oxidation of erythronate-4-phosphate to 3-hydroxy-2-oxo-4-phosphonooxybutanoate. The sequence is that of Erythronate-4-phosphate dehydrogenase from Salmonella paratyphi A (strain ATCC 9150 / SARB42).